We begin with the raw amino-acid sequence, 222 residues long: GTP cyclohydrolase 1 (222 aa).

Positions 111, 114, and 182 each coordinate Zn(2+).

The protein belongs to the GTP cyclohydrolase I family. Homomer.

It carries out the reaction GTP + H2O = 7,8-dihydroneopterin 3'-triphosphate + formate + H(+). It functions in the pathway cofactor biosynthesis; 7,8-dihydroneopterin triphosphate biosynthesis; 7,8-dihydroneopterin triphosphate from GTP: step 1/1. This chain is GTP cyclohydrolase 1, found in Shigella boydii serotype 18 (strain CDC 3083-94 / BS512).